The chain runs to 334 residues: Phosphate acyltransferase (334 aa).

Belongs to the PlsX family. Homodimer. Probably interacts with PlsY.

The protein localises to the cytoplasm. It carries out the reaction a fatty acyl-[ACP] + phosphate = an acyl phosphate + holo-[ACP]. It functions in the pathway lipid metabolism; phospholipid metabolism. Functionally, catalyzes the reversible formation of acyl-phosphate (acyl-PO(4)) from acyl-[acyl-carrier-protein] (acyl-ACP). This enzyme utilizes acyl-ACP as fatty acyl donor, but not acyl-CoA. In Mycoplasma capricolum subsp. capricolum (strain California kid / ATCC 27343 / NCTC 10154), this protein is Phosphate acyltransferase.